Consider the following 310-residue polypeptide: Beta-ketoacyl-[acyl-carrier-protein] synthase III 1 (310 aa).

Catalysis depends on residues Cys-112 and His-235. The segment at 236–240 is ACP-binding; that stretch reads QANIR. The active site involves Asn-265.

Belongs to the thiolase-like superfamily. FabH family. In terms of assembly, homodimer.

It localises to the cytoplasm. It carries out the reaction malonyl-[ACP] + acetyl-CoA + H(+) = 3-oxobutanoyl-[ACP] + CO2 + CoA. Its pathway is lipid metabolism; fatty acid biosynthesis. Catalyzes the condensation reaction of fatty acid synthesis by the addition to an acyl acceptor of two carbons from malonyl-ACP. Catalyzes the first condensation reaction which initiates fatty acid synthesis and may therefore play a role in governing the total rate of fatty acid production. Possesses both acetoacetyl-ACP synthase and acetyl transacylase activities. Its substrate specificity determines the biosynthesis of branched-chain and/or straight-chain of fatty acids. This chain is Beta-ketoacyl-[acyl-carrier-protein] synthase III 1, found in Bacillus anthracis.